We begin with the raw amino-acid sequence, 381 residues long: Tetraacyldisaccharide 4'-kinase (381 aa).

78-85 (AVGGTGKT) is an ATP binding site.

This sequence belongs to the LpxK family.

The catalysed reaction is a lipid A disaccharide + ATP = a lipid IVA + ADP + H(+). The protein operates within glycolipid biosynthesis; lipid IV(A) biosynthesis; lipid IV(A) from (3R)-3-hydroxytetradecanoyl-[acyl-carrier-protein] and UDP-N-acetyl-alpha-D-glucosamine: step 6/6. Functionally, transfers the gamma-phosphate of ATP to the 4'-position of a tetraacyldisaccharide 1-phosphate intermediate (termed DS-1-P) to form tetraacyldisaccharide 1,4'-bis-phosphate (lipid IVA). This is Tetraacyldisaccharide 4'-kinase from Syntrophobacter fumaroxidans (strain DSM 10017 / MPOB).